We begin with the raw amino-acid sequence, 245 residues long: tRNA pseudouridine synthase A (245 aa).

Asp52 acts as the Nucleophile in catalysis. Tyr111 is a binding site for substrate.

The protein belongs to the tRNA pseudouridine synthase TruA family. As to quaternary structure, homodimer.

It carries out the reaction uridine(38/39/40) in tRNA = pseudouridine(38/39/40) in tRNA. Its function is as follows. Formation of pseudouridine at positions 38, 39 and 40 in the anticodon stem and loop of transfer RNAs. The sequence is that of tRNA pseudouridine synthase A from Bradyrhizobium diazoefficiens (strain JCM 10833 / BCRC 13528 / IAM 13628 / NBRC 14792 / USDA 110).